The sequence spans 491 residues: Probable cytosol aminopeptidase (491 aa).

Residues Lys264 and Asp269 each coordinate Mn(2+). Residue Lys276 is part of the active site. Residues Asp287, Asp346, and Glu348 each coordinate Mn(2+). Arg350 is a catalytic residue.

The protein belongs to the peptidase M17 family. It depends on Mn(2+) as a cofactor.

It is found in the cytoplasm. It carries out the reaction Release of an N-terminal amino acid, Xaa-|-Yaa-, in which Xaa is preferably Leu, but may be other amino acids including Pro although not Arg or Lys, and Yaa may be Pro. Amino acid amides and methyl esters are also readily hydrolyzed, but rates on arylamides are exceedingly low.. It catalyses the reaction Release of an N-terminal amino acid, preferentially leucine, but not glutamic or aspartic acids.. Functionally, presumably involved in the processing and regular turnover of intracellular proteins. Catalyzes the removal of unsubstituted N-terminal amino acids from various peptides. The chain is Probable cytosol aminopeptidase from Xylella fastidiosa (strain M12).